The following is a 170-amino-acid chain: Small ribosomal subunit protein bS16 (170 aa).

Positions 109–170 (ALAEAEGGPS…AAESEAPAAE (62 aa)) are disordered. A compositionally biased stretch (basic and acidic residues) spans 131-150 (AKKDEQPTEKAAEPAAEKAA). Residues 151–170 (EPAAEAPAEAAAESEAPAAE) are compositionally biased toward low complexity.

This sequence belongs to the bacterial ribosomal protein bS16 family.

The chain is Small ribosomal subunit protein bS16 from Mycolicibacterium gilvum (strain PYR-GCK) (Mycobacterium gilvum (strain PYR-GCK)).